The primary structure comprises 266 residues: Small ribosomal subunit protein uS2 (266 aa).

The tract at residues 229-254 is disordered; the sequence is RTSDKEADTTTEEVAQEEVTDTKADE. Positions 237-247 are enriched in acidic residues; it reads TTTEEVAQEEV.

Belongs to the universal ribosomal protein uS2 family.

The chain is Small ribosomal subunit protein uS2 from Flavobacterium psychrophilum (strain ATCC 49511 / DSM 21280 / CIP 103535 / JIP02/86).